We begin with the raw amino-acid sequence, 383 residues long: Probable assembly chaperone of rpl4 (383 aa).

The span at 1–12 (MGKPRPHKKKAS) shows a compositional bias: basic residues. The tract at residues 1 to 33 (MGKPRPHKKKASKTREKSVLSAGGSISKRKMNE) is disordered. 4 TPR repeats span residues 35-68 (PRKL…ATSN), 73-106 (LSSL…DPTG), 116-147 (AEKF…LRGI), and 193-226 (PEVL…WKDL). The segment at 345–383 (NKELGEEMEDDSNVEDGEGEGEEEWEGIESDSDHEMADS) is disordered. Positions 350–374 (EEMEDDSNVEDGEGEGEEEWEGIES) are enriched in acidic residues.

It belongs to the ACL4 family.

Its subcellular location is the cytoplasm. It localises to the nucleus. Acts as a chaperone for the L4 ribosomal subunit, required for hierarchical ribosome assembly. Shields ribosomal protein L4 until timely release and insertion into the pre-ribosome is possible, once ribosomal protein L18 is present. In Emericella nidulans (strain FGSC A4 / ATCC 38163 / CBS 112.46 / NRRL 194 / M139) (Aspergillus nidulans), this protein is Probable assembly chaperone of rpl4.